Consider the following 984-residue polypeptide: PAX-interacting protein 1 (984 aa).

BRCT domains lie at 8-93 and 94-183; these read VPEE…GFSP and ESCQ…LYHP. An interaction with PAGR1 region spans residues 94-183; sequence ESCQIFFGIT…TRKDEALYHP (90 aa). Disordered stretches follow at residues 187 to 271 and 417 to 509; these read VYEE…PAEV and QQHL…LFGH. The segment covering 188–208 has biased composition (acidic residues); that stretch reads YEEEEEEEEEEEGAGNEEPDS. A compositionally biased stretch (low complexity) spans 217-229; the sequence is KSSPASSQEGSPS. Residues Ser-227 and Ser-235 each carry the phosphoserine modification. Positions 424–454 are enriched in pro residues; that stretch reads PYPPPPPHPFPPPPAHPHQFPQPPLQRPQPP. Low complexity predominate over residues 455 to 485; it reads LQQQQLSHLQQQQLQHLQRLQQMQPTPTAQL. Over residues 486–499 the composition is skewed to pro residues; sequence PGPPAQALQPPPPQ. The tract at residues 505 to 984 is interaction with TP53BP1; the sequence is PLFGHDPAVE…TLDYESYKFN (480 aa). BRCT domains follow at residues 516–609 and 616–704; these read PEEG…RALH and PGGK…TQYG. A Nuclear localization signal motif is present at residues 583–600; sequence RKRCITAHWLNTVLKKKK. The interval 750–771 is disordered; it reads KQNEVTNVQPSSKRARIEDIPP. Residues 752–761 are compositionally biased toward polar residues; sequence NEVTNVQPSS. 2 BRCT domains span residues 781–862 and 883–924; these read TPFV…NYLL and HASP…QPSF.

As to quaternary structure, interacts with the C-terminal transactivation domain of PAX2. Forms a constitutive complex with PAGR1 independently of the MLL2/MLL3 complex. Interacts with TP53BP1 (when phosphorylated at the N-terminus by ATM). Interacts with HLTF. Component of the KMT2 family MLL2/MLL3 complex (also named ASCOM complex), at least composed of the HMTs KMT2D and/or KMT2C, the common subunits ASH2L, RBBP5, WDR5 and DPY30, and the complex type-specific subunits PAXIP1/PTIP, PAGR1, NCOA6 and KDM6A; required for the association of PAGR1 with the MLL2/MLL3 complex. Interacts with NUPR1; this interaction prevents PAXIP1 inhibition of PAX2 transcription factor activity.

It is found in the nucleus matrix. Its subcellular location is the chromosome. Involved in DNA damage response and in transcriptional regulation through histone methyltransferase (HMT) complexes. Plays a role in early development. In DNA damage response is required for cell survival after ionizing radiation. In vitro shown to be involved in the homologous recombination mechanism for the repair of double-strand breaks (DSBs). Its localization to DNA damage foci requires RNF8 and UBE2N. Recruits TP53BP1 to DNA damage foci and, at least in particular repair processes, effective DNA damage response appears to require the association with TP53BP1 phosphorylated by ATM at 'Ser-25'. Together with TP53BP1 regulates ATM association. Proposed to recruit PAGR1 to sites of DNA damage and the PAGR1:PAXIP1 complex is required for cell survival in response to DNA damage; the function is probably independent of MLL-containing histone methyltransferase (HMT) complexes. However, this function has been questioned. Promotes ubiquitination of PCNA following UV irradiation and may regulate recruitment of polymerase eta and RAD51 to chromatin after DNA damage. Proposed to be involved in transcriptional regulation by linking MLL-containing histone methyltransferase (HMT) complexes to gene promoters by interacting with promoter-bound transcription factors such as PAX2. Associates with gene promoters that are known to be regulated by KMT2D/MLL2. During immunoglobulin class switching in activated B-cells is involved in trimethylation of histone H3 at 'Lys-4' and in transcription initiation of downstream switch regions at the immunoglobulin heavy-chain (Igh) locus; this function appears to involve the recruitment of MLL-containing HMT complexes. Conflictingly, its function in transcriptional regulation during immunoglobulin class switching is reported to be independent of the MLL2/MLL3 complex. The polypeptide is PAX-interacting protein 1 (PAXIP1) (Bos taurus (Bovine)).